We begin with the raw amino-acid sequence, 431 residues long: L-lysine N6-monooxygenase MbtG (431 aa).

Residues 1–21 form the signal peptide; it reads MNPTLAVLGAGAKAVAVAAKA.

This sequence belongs to the lysine N(6)-hydroxylase/L-ornithine N(5)-oxygenase family. Requires FAD as cofactor.

It catalyses the reaction L-lysine + NADPH + O2 = N(6)-hydroxy-L-lysine + NADP(+) + H2O. Its pathway is siderophore biosynthesis; mycobactin biosynthesis. In terms of biological role, flavoprotein monooxygenase required for N-hydroxylation of the two acylated lysine residues during mycobactin assembly, thus producing the hydroxamate groups necessary for iron sequestration. Is also able, but less efficiently, to hydroxylate L-lysine (non acylated) in vitro. This chain is L-lysine N6-monooxygenase MbtG (mbtG), found in Mycobacterium bovis (strain ATCC BAA-935 / AF2122/97).